The chain runs to 490 residues: UDP-N-acetylmuramate--L-alanine ligase (490 aa).

122 to 128 contributes to the ATP binding site; sequence GTHGKTS.

It belongs to the MurCDEF family.

It localises to the cytoplasm. The enzyme catalyses UDP-N-acetyl-alpha-D-muramate + L-alanine + ATP = UDP-N-acetyl-alpha-D-muramoyl-L-alanine + ADP + phosphate + H(+). Its pathway is cell wall biogenesis; peptidoglycan biosynthesis. In terms of biological role, cell wall formation. The chain is UDP-N-acetylmuramate--L-alanine ligase from Mycobacteroides abscessus (strain ATCC 19977 / DSM 44196 / CCUG 20993 / CIP 104536 / JCM 13569 / NCTC 13031 / TMC 1543 / L948) (Mycobacterium abscessus).